Here is a 133-residue protein sequence, read N- to C-terminus: DNA-directed RNA polymerase subunit omega (133 aa).

This sequence belongs to the RNA polymerase subunit omega family. In terms of assembly, the RNAP catalytic core consists of 2 alpha, 1 beta, 1 beta' and 1 omega subunit. When a sigma factor is associated with the core the holoenzyme is formed, which can initiate transcription.

It carries out the reaction RNA(n) + a ribonucleoside 5'-triphosphate = RNA(n+1) + diphosphate. In terms of biological role, promotes RNA polymerase assembly. Latches the N- and C-terminal regions of the beta' subunit thereby facilitating its interaction with the beta and alpha subunits. This Brucella abortus (strain S19) protein is DNA-directed RNA polymerase subunit omega.